We begin with the raw amino-acid sequence, 1052 residues long: Error-prone DNA polymerase (1052 aa).

This sequence belongs to the DNA polymerase type-C family. DnaE2 subfamily.

Its subcellular location is the cytoplasm. The enzyme catalyses DNA(n) + a 2'-deoxyribonucleoside 5'-triphosphate = DNA(n+1) + diphosphate. In terms of biological role, DNA polymerase involved in damage-induced mutagenesis and translesion synthesis (TLS). It is not the major replicative DNA polymerase. The polypeptide is Error-prone DNA polymerase (Bordetella parapertussis (strain 12822 / ATCC BAA-587 / NCTC 13253)).